The primary structure comprises 858 residues: Heat shock protein 105 kDa (858 aa).

The residue at position 2 (Ser2) is an N-acetylserine. At Lys471 the chain carries N6-acetyllysine. Disordered stretches follow at residues 500–584 (KVPT…PPEA) and 796–858 (CEPV…MDLD). Positions 504-514 (EENEMSSEADM) are enriched in acidic residues. Ser509 and Ser510 each carry phosphoserine. Residues 532-554 (QQDNSEAGTQPQVQTDAQQTSQS) are compositionally biased toward polar residues. Ser557 bears the Phosphoserine mark. The residue at position 561 (Thr561) is a Phosphothreonine. Composition is skewed to basic and acidic residues over residues 563–584 (EENK…PPEA) and 805–814 (PKIESPKLER). The residue at position 809 (Ser809) is a Phosphoserine. Thr815 is subject to Phosphothreonine. Basic and acidic residues predominate over residues 821-832 (IDKKEEDLEDKN). Polar residues predominate over residues 849–858 (EKNSVNMDLD).

It belongs to the heat shock protein 70 family. In terms of assembly, interacts with HSPA8/HSC70. Interacts with HSPA1A (via NBD) and HSPA1B (via NBD). Phosphorylation on Ser-509 may be important for regulation of the HSPA8/HSC70 chaperone activity.

It localises to the cytoplasm. Acts as a nucleotide-exchange factor (NEF) for chaperone proteins HSPA1A and HSPA1B, promoting the release of ADP from HSPA1A/B thereby triggering substrate release. Prevents the aggregation of denatured proteins in cells under severe stress, on which the ATP levels decrease markedly. Inhibits HSPA8/HSC70 ATPase and chaperone activities. The polypeptide is Heat shock protein 105 kDa (HSPH1) (Pongo abelii (Sumatran orangutan)).